Consider the following 335-residue polypeptide: uncharacterized protein (335 aa).

Disordered stretches follow at residues 152–179 (IQLP…TVND) and 252–271 (LDLF…SASL). S257 and S260 each carry phosphoserine. A compositionally biased stretch (polar residues) spans 257–271 (SPSSENKSTAGSASL).

This is an uncharacterized protein from Schizosaccharomyces pombe (strain 972 / ATCC 24843) (Fission yeast).